A 479-amino-acid chain; its full sequence is Probable glycine dehydrogenase (decarboxylating) subunit 2 (479 aa).

The residue at position 265 (lysine 265) is an N6-(pyridoxal phosphate)lysine.

The protein belongs to the GcvP family. C-terminal subunit subfamily. In terms of assembly, the glycine cleavage system is composed of four proteins: P, T, L and H. In this organism, the P 'protein' is a heterodimer of two subunits. Pyridoxal 5'-phosphate is required as a cofactor.

It catalyses the reaction N(6)-[(R)-lipoyl]-L-lysyl-[glycine-cleavage complex H protein] + glycine + H(+) = N(6)-[(R)-S(8)-aminomethyldihydrolipoyl]-L-lysyl-[glycine-cleavage complex H protein] + CO2. The glycine cleavage system catalyzes the degradation of glycine. The P protein binds the alpha-amino group of glycine through its pyridoxal phosphate cofactor; CO(2) is released and the remaining methylamine moiety is then transferred to the lipoamide cofactor of the H protein. In Pseudothermotoga lettingae (strain ATCC BAA-301 / DSM 14385 / NBRC 107922 / TMO) (Thermotoga lettingae), this protein is Probable glycine dehydrogenase (decarboxylating) subunit 2.